Reading from the N-terminus, the 70-residue chain is Large ribosomal subunit protein bL31 (70 aa).

Zn(2+) contacts are provided by C16, C18, C37, and C40.

Belongs to the bacterial ribosomal protein bL31 family. Type A subfamily. Part of the 50S ribosomal subunit. Requires Zn(2+) as cofactor.

Functionally, binds the 23S rRNA. The polypeptide is Large ribosomal subunit protein bL31 (Shewanella halifaxensis (strain HAW-EB4)).